The sequence spans 231 residues: ATP phosphoribosyltransferase (231 aa).

This sequence belongs to the ATP phosphoribosyltransferase family. Short subfamily. As to quaternary structure, heteromultimer composed of HisG and HisZ subunits.

The protein localises to the cytoplasm. It carries out the reaction 1-(5-phospho-beta-D-ribosyl)-ATP + diphosphate = 5-phospho-alpha-D-ribose 1-diphosphate + ATP. Its pathway is amino-acid biosynthesis; L-histidine biosynthesis; L-histidine from 5-phospho-alpha-D-ribose 1-diphosphate: step 1/9. In terms of biological role, catalyzes the condensation of ATP and 5-phosphoribose 1-diphosphate to form N'-(5'-phosphoribosyl)-ATP (PR-ATP). Has a crucial role in the pathway because the rate of histidine biosynthesis seems to be controlled primarily by regulation of HisG enzymatic activity. In Brucella suis (strain ATCC 23445 / NCTC 10510), this protein is ATP phosphoribosyltransferase.